The primary structure comprises 266 residues: Type II iodothyronine deiodinase (266 aa).

At 1–13 (MGSASEDLLVTLQ) the chain is on the lumenal side. Residues 14 to 34 (ILPGFFSNCLFLALYDSVVLV) traverse the membrane as a helical; Signal-anchor for type III membrane protein segment. The Cytoplasmic portion of the chain corresponds to 35–266 (KRVVALLSRS…QWLELSYGRR (232 aa)). Residue U134 is part of the active site. Residue U134 is a non-standard amino acid, selenocysteine.

It belongs to the iodothyronine deiodinase family. Predominantly monomer. Can form homodimers but homodimerization is not essential for enzyme activity.

It localises to the endoplasmic reticulum membrane. It carries out the reaction 3,3',5-triiodo-L-thyronine + iodide + A + H(+) = L-thyroxine + AH2. It catalyses the reaction 3,3'-diiodo-L-thyronine + iodide + A + H(+) = 3,3',5'-triiodo-L-thyronine + AH2. The catalysed reaction is 3'-iodo-L-thyronine + iodide + A + H(+) = 3',5'-diiodo-L-thyronine + AH2. With respect to regulation, not inhibited by N(6)-propylthiouracil. In terms of biological role, plays a crucial role in the metabolism of thyroid hormones (TH) and has specific roles in TH activation and inactivation by deiodination. Catalyzes the conversion of T4 (L-thyroxine/3,5,3',5'-tetraiodothyronine) to T3 (3,5,3'-triiodothyronine) and rT3 (3,3',5'-triiodothyronine) to T2 (3,3'-diiodothyronine) via outer-ring deiodination (ORD). Catalyzes the conversion 3',5'-T2 (3,5-diiodothyronine) to 3-T1 (3-monoiodothyronine) via ORD. This is Type II iodothyronine deiodinase (dio2) from Fundulus heteroclitus (Killifish).